The sequence spans 507 residues: MATLRVDEINKILRERIEQYNRKVGIENIGRVVQVGDGIARIIGLGEIMSGELVEFAEGTRGIALNLESKNVGIVLMGDGLMIQEGSFVKATGRIAQIPVSEAYLGRVINALAKPIDGRGEIVASESRLIESPAPGIISRRSVYEPLQTGLIAIDSMIPIGRGQRELIIGDRQTGKTAVATDTILNQKGQDVICVYVAIGQRASSVAQVVTTFHEEGAMEYTIVVAEMADSPATLQYLAPYTGAALAEYFMYRERHTLIIYDDLSKQAQAYRQMSLLLRRPPGREAYLGDVFYLHSRLLERAAKLNSLLGEGSMTALPIVETQSGDVSAYIPTNVISITDGQIFLSADLFNAGIRPAINVGISVSRVGSAAQIKAMKQVAGKSKLELAQFAELQAFAQFASALDKTSQNQLARGRRLRELLKQSQSNPLPVEEQVATIYTGTRGYLDSLEIEQVKKFLDELRKHLKDTKPQFQEIISSSKTFTEQAETLLKEAIQEQLERFSLQEQT.

170–177 contributes to the ATP binding site; that stretch reads GDRQTGKT. Phosphoserine is present on serine 383.

It belongs to the ATPase alpha/beta chains family. F-type ATPases have 2 components, CF(1) - the catalytic core - and CF(0) - the membrane proton channel. CF(1) has five subunits: alpha(3), beta(3), gamma(1), delta(1), epsilon(1). CF(0) has four main subunits: a, b, b' and c. Post-translationally, only phosphorylated in mesophyll cells, and only when cells are grown under high rather than low light regimes (70 vs 900 umol photons/m-2/s).

Its subcellular location is the plastid. The protein localises to the chloroplast thylakoid membrane. The catalysed reaction is ATP + H2O + 4 H(+)(in) = ADP + phosphate + 5 H(+)(out). Its function is as follows. Produces ATP from ADP in the presence of a proton gradient across the membrane. The alpha chain is a regulatory subunit. In Zea mays (Maize), this protein is ATP synthase subunit alpha, chloroplastic.